The sequence spans 225 residues: Ras-related protein Rab-21 (225 aa).

A2 carries the N-acetylalanine modification. GTP is bound by residues G28, G31, K32, T33, S34, N45, D46, H48, T50, and T51. Residue T33 coordinates Mg(2+). The short motif at 43–56 is the Switch 1 element; sequence KFNDKHITTLQASF. Positions 51 and 74 each coordinate Mg(2+). The Switch 2 motif lies at 76 to 94; that stretch reads AGQERFHALGPIYYRDSNG. 6 residues coordinate GTP: G77, N132, K133, D135, A163, and K164. The segment at 188–225 is disordered; that stretch reads ERAKGNGSSQPGTARRGVQIIDDEPQAQTSGGGCCSSG. S-geranylgeranyl cysteine attachment occurs at residues C221 and C222. C222 is modified (cysteine methyl ester). Positions 223–225 are cleaved as a propeptide — removed in mature form; it reads SSG.

It belongs to the small GTPase superfamily. Rab family. As to quaternary structure, interacts with the cytoplasmic tail of integrins ITGA1, ITGA2, ITGA5, ITGA6, ITGA11 and ITGB1. Interacts with RABGEF1 (via VPS9 domain). Interacts with ANKRD27. Interacts with VAMP7. Interacts (in GTP-bound form) with VAMP8 in response to starvation; the interaction probably regulates VAMP8 endolysosomal trafficking. Interacts (active GTP-bound form) with TMED10; the interaction is indirect and regulates TMED10 abundance and localization at the Golgi. Requires Mg(2+) as cofactor. In terms of tissue distribution, widely expressed. In jejunal tissue, predominantly expressed in the apical region of the epithelial cell layer of the villi, weak expression, if any, in the crypt epithelium. Capillary endothelium and some cell types in the lamina propria also show expression.

It localises to the endoplasmic reticulum membrane. The protein localises to the golgi apparatus. Its subcellular location is the trans-Golgi network. It is found in the golgi apparatus membrane. The protein resides in the early endosome membrane. It localises to the cytoplasmic vesicle membrane. The protein localises to the cleavage furrow. Its subcellular location is the cell projection. It is found in the neuron projection. The catalysed reaction is GTP + H2O = GDP + phosphate + H(+). Its activity is regulated as follows. Regulated by guanine nucleotide exchange factors (GEFs) including ANKRD27 and RABGEF1, which promote the exchange of bound GDP for free GTP. Regulated by GTPase activating proteins (GAPs) which increase the GTP hydrolysis activity. Inhibited by GDP dissociation inhibitors (GDIs). The small GTPases Rab are key regulators of intracellular membrane trafficking, from the formation of transport vesicles to their fusion with membranes. Rabs cycle between an inactive GDP-bound form and an active GTP-bound form that is able to recruit to membranes different sets of downstream effectors directly responsible for vesicle formation, movement, tethering and fusion. RAB21 is involved in membrane trafficking control. During the mitosis of adherent cells, controls the endosomal trafficking of integrins which is required for the successful completion of cytokinesis. Regulates integrin internalization and recycling, but does not influence the traffic of endosomally translocated receptors in general. As a result, may regulate cell adhesion and migration. Involved in neurite growth. Following SBF2/MTMT13-mediated activation in response to starvation-induced autophagy, binds to and regulates SNARE protein VAMP8 endolysosomal transport required for SNARE-mediated autophagosome-lysosome fusion. Modulates protein levels of the cargo receptors TMED2 and TMED10, and required for appropriate Golgi localization of TMED10. The chain is Ras-related protein Rab-21 from Homo sapiens (Human).